Reading from the N-terminus, the 459-residue chain is UNC93-like protein 1 (459 aa).

The disordered stretch occupies residues 1 to 26 (MNVRDEGKTTAEKHGGGEENKSPENK). 11 helical membrane-spanning segments follow: residues 38–58 (LMGF…GMGG), 73–93 (AVYT…NVLG), 96–116 (LTLA…LYYN), 122–142 (AFAI…WAGE), 159–179 (IALF…IPFI), 195–215 (YIAF…ILPA), 251–271 (LLIV…FNNV), 287–307 (FYWG…DFSF), 314–334 (GFTG…GGLA), 355–375 (GIEF…DAMY), and 425–445 (LIVN…LVYF).

This sequence belongs to the unc-93 family.

Its subcellular location is the membrane. The chain is UNC93-like protein 1 from Arabidopsis thaliana (Mouse-ear cress).